Consider the following 611-residue polypeptide: MDPGAGSETSLTVNEQVIVMSGHETIRVLEVGVDAQLPAEEESKGLEGVAAEGSQSGDPAEASQAAGEAGPDNLGSSAEATVKSPPGIPPSPATAIATFSQAPSQPQASQTLTPLAVQAAPQVLTQENLATVLTGVMVPAGAVTQPLLIPISIAGQVAGQQGLAVWTIPTATVAALPGLTAASPTGGVFKPPLAGLQAAAVLNTALPAPVQAAAPVQASSTAQPRPPAQPQTLFQTQPLLQTTPAILPQPTAATAAAPTPKPVDTPPQITVQPAGFAFSPGIISAASLGGQTQILGSLTTAPVITSAIPSMPGISSQILTNAQGQVIGTLPWVVNSASVAAPAPAQSLQVQAVTPQLLLNAQGQVIATLASSPLPPPVAVRKPSTPESPAKSEVQPIQPTPTVPQPAVVIASPAPAAKPSASAPIPITCSETPTVSQLVSKPHTPSLDEDGINLEEIREFAKNFKIRRLSLGLTQTQVGQALTATEGPAYSQSAICRFEKLDITPKSAQKLKPVLEKWLNEAELRNQEGQQNLMEFVGGEPSKKRKRRTSFTPQAIEALNAYFEKNPLPTGQEITEIAKELNYDREVVRVWFCNRRQTLKNTSKLNVFQIP.

The disordered stretch occupies residues 62 to 93; sequence ASQAAGEAGPDNLGSSAEATVKSPPGIPPSPA. A POU-specific domain is found at 449 to 523; that stretch reads EDGINLEEIR…VLEKWLNEAE (75 aa). Residues 544-603 constitute a DNA-binding region (homeobox); that stretch reads KRKRRTSFTPQAIEALNAYFEKNPLPTGQEITEIAKELNYDREVVRVWFCNRRQTLKNTS.

This sequence belongs to the POU transcription factor family. Class-6 subfamily. In terms of tissue distribution, in the embryo, expressed exclusively in the developing brain, whereas in the adult its expression is restricted to brain, heart, skeletal muscle and lung. In the brain, the highest expression levels are found in specific cell layers of the cortex, the olfactory bulb, the hippocampus and the cerebellum.

The protein resides in the nucleus. Functionally, transcription factor that binds preferentially to a variant of the octamer motif (5'-ATGATAAT-3'). The protein is POU domain, class 6, transcription factor 1 (POU6F1) of Homo sapiens (Human).